Reading from the N-terminus, the 577-residue chain is Proline--tRNA ligase (577 aa).

The protein belongs to the class-II aminoacyl-tRNA synthetase family. ProS type 1 subfamily. As to quaternary structure, homodimer.

It is found in the cytoplasm. It carries out the reaction tRNA(Pro) + L-proline + ATP = L-prolyl-tRNA(Pro) + AMP + diphosphate. In terms of biological role, catalyzes the attachment of proline to tRNA(Pro) in a two-step reaction: proline is first activated by ATP to form Pro-AMP and then transferred to the acceptor end of tRNA(Pro). As ProRS can inadvertently accommodate and process non-cognate amino acids such as alanine and cysteine, to avoid such errors it has two additional distinct editing activities against alanine. One activity is designated as 'pretransfer' editing and involves the tRNA(Pro)-independent hydrolysis of activated Ala-AMP. The other activity is designated 'posttransfer' editing and involves deacylation of mischarged Ala-tRNA(Pro). The misacylated Cys-tRNA(Pro) is not edited by ProRS. The protein is Proline--tRNA ligase of Helicobacter pylori (strain Shi470).